The chain runs to 213 residues: Cysteine dioxygenase (213 aa).

Fe cation is bound by residues histidine 100, histidine 102, and histidine 160. The segment at residues 107–177 (CVMKVLKGSL…TNFAISLHLY (71 aa)) is a cross-link (3'-(S-cysteinyl)-tyrosine (Cys-Tyr)).

It belongs to the cysteine dioxygenase family. Fe cation serves as cofactor. In terms of processing, the thioether cross-link between Cys-107 and Tyr-177 plays a structural role through stabilizing the Fe(2+) ion, and prevents the production of highly damaging free hydroxyl radicals by holding the oxygen radical via hydroxyl hydrogen.

It carries out the reaction L-cysteine + O2 = 3-sulfino-L-alanine + H(+). The protein is Cysteine dioxygenase (CDO1) of Ajellomyces capsulatus (strain G186AR / H82 / ATCC MYA-2454 / RMSCC 2432) (Darling's disease fungus).